A 429-amino-acid polypeptide reads, in one-letter code: Histidine--tRNA ligase (429 aa).

It belongs to the class-II aminoacyl-tRNA synthetase family. Homodimer.

The protein resides in the cytoplasm. It carries out the reaction tRNA(His) + L-histidine + ATP = L-histidyl-tRNA(His) + AMP + diphosphate + H(+). The sequence is that of Histidine--tRNA ligase from Pelodictyon phaeoclathratiforme (strain DSM 5477 / BU-1).